The following is a 103-amino-acid chain: Small ribosomal subunit protein uS10 (103 aa).

This sequence belongs to the universal ribosomal protein uS10 family. As to quaternary structure, part of the 30S ribosomal subunit.

In terms of biological role, involved in the binding of tRNA to the ribosomes. This chain is Small ribosomal subunit protein uS10, found in Nitratiruptor sp. (strain SB155-2).